The chain runs to 396 residues: FAD-dependent monooxygenase phomE' (396 aa).

Position 3 (Glu-3) interacts with FAD. Residues Arg-158 and Tyr-196 contribute to the active site. The FAD site is built by Asp-277 and Gly-290.

Belongs to the paxM FAD-dependent monooxygenase family. As to quaternary structure, monomer. It depends on FAD as a cofactor.

FAD-dependent monooxygenase; part of the gene cluster that mediates the biosynthesis of the phomopsins, a group of hexapeptide mycotoxins which infects lupins and causes lupinosis disease in livestock. The role of phomE' within the phomopsins biosynthesis pathway has still to be determined. The pathway starts with the processing of the precursor phomA by several endopeptidases including kexin proteases as well as the cluster-specific S41 family peptidase phomP1 and the oligopeptidase phomG to produce 10 identical copies of the hexapeptide Tyr-Val-Ile-Pro-Ile-Asp. After being excised from the precursor peptide, the core peptides are cyclized and modified post-translationally by enzymes encoded within the gene cluster. The timing and order of proteolysis of the phomA precursor and PTMs are still unknown. Two tyrosinase-like enzymes, phomQ1 and phomQ2, catalyze the chlorination and hydroxylation of Tyr, respectively. PhomYb, is proposed to be involved in the construction of the macrocyclic structure. The other 4 ustYa family proteins may be involved in PTMs that generate the unique structure of phomopsin A. PhomYa is required for the hydroxylation of C-beta of Tyr. PhomYc, phomYd, and phomYe are responsible for the biosynthesis of 2,3-dehydroisoleucine (dIle), 2,3-dehydroaspartic acid (dAsp), and 3,4-dehydroproline (dPro), respectively. While dIle formation by phomYc is indispensable for the installation of dAsp by phomYd, the order of the other PTMs have not been elucidated yet. Most of the biosynthetic enzymes likely have broad substrate specificity, and thus, there might be a metabolic grid from a precursor to phomopsin A. The enzyme(s) responsible for the biosynthesis of 3,4-dehydrovaline (dVal) have also not been identified yet. Finally, phomM acts as an S-adenosylmethionine-dependent alpha-N-methyltransferase that catalyzes two successive N-methylation reactions, converting N-desmethyl-phomopsin A to phomopsin A and phomopsin A further to an N,N-dimethylated congener called phomopsin E. The chain is FAD-dependent monooxygenase phomE' from Diaporthe leptostromiformis (Lupinosis disease fungus).